Here is a 600-residue protein sequence, read N- to C-terminus: Translation initiation factor IF-2 (600 aa).

In terms of domain architecture, tr-type G spans 112–279; that stretch reads ERAPIITVMG…AINLQAEILE (168 aa). A G1 region spans residues 121 to 128; sequence GHVDHGKT. A GTP-binding site is contributed by 121–128; the sequence is GHVDHGKT. A G2 region spans residues 146 to 150; sequence GITQH. The tract at residues 167–170 is G3; sequence DTPG. Residues 167 to 171 and 221 to 224 contribute to the GTP site; these read DTPGH and NKMD. The tract at residues 221 to 224 is G4; sequence NKMD. The segment at 257-259 is G5; the sequence is SAL.

It belongs to the TRAFAC class translation factor GTPase superfamily. Classic translation factor GTPase family. IF-2 subfamily.

It is found in the cytoplasm. In terms of biological role, one of the essential components for the initiation of protein synthesis. Protects formylmethionyl-tRNA from spontaneous hydrolysis and promotes its binding to the 30S ribosomal subunits. Also involved in the hydrolysis of GTP during the formation of the 70S ribosomal complex. The sequence is that of Translation initiation factor IF-2 from Mycoplasma mobile (strain ATCC 43663 / 163K / NCTC 11711) (Mesomycoplasma mobile).